A 744-amino-acid chain; its full sequence is MNELLAEMAAVSSRRKQSKPRRMSGEGDAMMSPIDLSTKSFDENNCEKGAGGALPLEDRSNILPHFSVPFANPQQFLSLCAQLGNSSSRNVSSTASTTSSCPIQSCSQSFSSPAALTWHVLDAHEDEQEIFSCDVCTTTFSNGQDIREHKCQKTLASRSTSVPPSTIPSSVCFLSTPTTPCLQFSINESIGTSEIREEDEEEDMDVEDGEHVANQLFGHLLQKSDDKSKMASLFNHAFPPFAAFPNMPPPFLMRQPFDPRADVFAAGRHDNDDDWEALMEISTSDEAEKIRALVGDKAVPTTDPNQCILCRRVLSCKSALQMHYRTHTGERPFKCKICQRAFTTKGNLKTHMGVHRSKHSFRGLPISLPPQLAAMHQHQHQIAPPQRIHIHNPPTSAASAAAAVAQIQASQQCPICQQRFLNAGELAVHITEHRNSLTQPPRVMPTPTTTRVQTFPFVPFFTTPPSLNATDMSTQFNLANILSAQLKNDSSPNTDTSSVEEKITRDDPPKMASLSPSNSSDSSSSVRQDILESSEFEEKLKKLEEPPILEQQVSTTPNPKNENPLLAMQKMWAETEPPPPRQMPVLSKHQCGVCFKHFSSSSALQIHMRTHTGDKPFKCDMCGRAFTTRGNLKVHMGTHSWQQSPSRRGRRIFDVASSVTEKPMLQSPILPTSGAPGASPLAMLGPNGLSGLEMMMMLWRTVCSVCQKVCQSPNELEQHLKEHLNNGSSAAPTPLASAATPPPS.

The segment at 6 to 32 (AEMAAVSSRRKQSKPRRMSGEGDAMMS) is disordered. Positions 13 to 22 (SRRKQSKPRR) are enriched in basic residues. 4 C2H2-type zinc fingers span residues 99–124 (SSCP…LDAH), 305–327 (NQCI…YRTH), 333–355 (FKCK…MGVH), and 411–433 (QQCP…ITEH). Over residues 487–497 (KNDSSPNTDTS) the composition is skewed to polar residues. Disordered regions lie at residues 487–530 (KNDS…RQDI) and 542–562 (KLEE…PKNE). Basic and acidic residues predominate over residues 499-509 (VEEKITRDDPP). Residues 513–525 (SLSPSNSSDSSSS) are compositionally biased toward low complexity. Polar residues predominate over residues 551–561 (QQVSTTPNPKN). 3 consecutive C2H2-type zinc fingers follow at residues 589-611 (HQCG…MRTH), 617-639 (FKCD…MGTH), and 701-723 (TVCS…LKEH). Positions 725–744 (NNGSSAAPTPLASAATPPPS) are disordered. Positions 728–744 (SSAAPTPLASAATPPPS) are enriched in low complexity.

This sequence belongs to the sal C2H2-type zinc-finger protein family.

It localises to the nucleus. Its function is as follows. Transcription factor, involved in positive and negative modulation of transcription. Binds to multiple DNA sequence motifs in the regulatory elements of target genes, including homeobox selector egl-5 and LIM homeobox mec-3. Involved in cell-fate regulation in multiple lineages, including neuronal, mesodermal and vulval. Required to regulate the fate of PLM touch receptor neurons, acting via negative modulation of transcription of egl-5 and mec-3. May modulate gene expression by interacting with different transcription factors during neuronal and mesodermal cell development. Promotes the proliferative sex myoblast (SM) fate, in a cell autonomous manner, acting via the SoxC transcription factor sem-2. Involved in vulval cell-fate determination, acting by regulating expression of homeobox protein lin-39, and may link lin-39 to incoming signaling pathways. Plays a role in detoxification of reactive oxygen species (ROS), by regulating expression of transcription factor skn-1 and the phase II detoxification genes. The chain is Spalt-like protein sem-4 from Caenorhabditis elegans.